Reading from the N-terminus, the 47-residue chain is Delta-stichotoxin-Hcr3a (47 aa).

Residue Pro3 is modified to Hydroxyproline. 3 disulfide bridges follow: Cys4/Cys44, Cys6/Cys34, and Cys27/Cys45.

It belongs to the sea anemone sodium channel inhibitory toxin family. Type I subfamily.

The protein localises to the secreted. It localises to the nematocyst. Its function is as follows. Inhibits voltage-gated sodium channels (Nav). The protein is Delta-stichotoxin-Hcr3a of Radianthus crispa (Leathery sea anemone).